The following is a 657-amino-acid chain: MAEALPPRSPPDDVDIDPDFGPQSRPRSCTWPLQRLDSQGSPGKPNSGAGEAADTSSMIPEEEDDDYEGAASTATVLGTAGDKGTLVLLSGGESGQLAVLASPVGGVETLQVSLGGEGAGGAVSGAGGQQQQRKCSSRRNAWGNMSYADLITRAIESTQDKRLTLSQIYDWMVRSVPYFKDKGDSNSSAGWKNSIRHNLSLHSRFIRVQNEGSGKSSWWMINPEGGKGGKAPRRRAVSMDNSNKYTKSRGRAAKKKASLQASSDATDDSPSQLSKWPGSPTSRSSDKLDTWTDFRSRTNSNASTISGRLSPIPATTELDDVQDDDSPLSPMLYNSPGSLSPSISKPCTVEMPRITDMAETMNLNDGLPENLMDDLLDDISLTSSQQSSPGVLMQRSSSFTYGTKGSGIGSPSNNFNNTGSFNFPLTSLRQSPMQTIQENKQATFSSMNHYSNQSLQDLLNTDTLSHSDVLMTQSDPLMSQASTAVTAQNSRRNIILRNDPMMSFAAQPNQGGNLVNQNSLHQQQSLNSFQGGSRALSNNLSNTGLNDSSILESTKHQQQSSVSHSMQTISDTLSGSLYSSGVTLPTLGHEKFPTDLDLDIFNGSLECDMETIIRNDLMDADGLDFNFDTLISAQNVSLSVGSFTGAKQTSSQSWVPG.

Disordered stretches follow at residues 1–71 and 216–320; these read MAEA…EGAA and SSWW…ELDD. The segment at residues 142 to 236 is a DNA-binding region (fork-head); it reads WGNMSYADLI…KGGKAPRRRA (95 aa). The span at 246–257 shows a compositional bias: basic residues; sequence TKSRGRAAKKKA. Positions 268–283 are enriched in polar residues; it reads DSPSQLSKWPGSPTSR. Positions 284–296 are enriched in basic and acidic residues; sequence SSDKLDTWTDFRS. Over residues 297 to 307 the composition is skewed to polar residues; that stretch reads RTNSNASTISG.

In terms of processing, dephosphorylation may promote translocation to the nucleus where the protein induces transcription of target genes and triggers apoptosis. As to expression, localized to the animal hemisphere during early cleavage stages. At the late neurula, localized in the anterior neural plate, neural crest cells and in the hatching gland. As development progresses, expression becomes less localized, being observed in a variety of organs and tissues including the head, branchial arches and somites by stage 32.

It is found in the cytoplasm. The protein localises to the cytosol. It localises to the nucleus. Its function is as follows. Transcriptional activator that recognizes and binds to the DNA sequence 5'-[AG]TAAA[TC]A-3' and regulates different processes, such as apoptosis and autophagy. Acts as a positive regulator of autophagy in skeletal muscle: in starved cells, enters the nucleus following dephosphorylation and binds the promoters of autophagy genes, thereby activating their expression, resulting in proteolysis of skeletal muscle proteins. Triggers apoptosis in the absence of survival factors, including neuronal cell death upon oxidative stress. In response to metabolic stress, translocates into the mitochondria where it promotes mtDNA transcription. Also acts as a key regulator of chondrogenic commitment of skeletal progenitor cells in response to lipid availability: when lipids levels are low, translocates to the nucleus and promotes expression of sox9, which induces chondrogenic commitment and suppresses fatty acid oxidation. Also acts as a key regulator of regulatory T-cells (Treg) differentiation. The chain is Forkhead box protein O3 from Xenopus laevis (African clawed frog).